The primary structure comprises 1060 residues: Valine--tRNA ligase, mitochondrial (1060 aa).

Residues 1–15 constitute a mitochondrion transit peptide; sequence MPHLPLASFRPPLWG. A disordered region spans residues 25–50; the sequence is PQALCTQPEPHGSPVSRRNREAKQKR. Positions 146 to 156 match the 'HIGH' region motif; sequence PNVTGSLHIGH. At lysine 548 the chain carries N6-acetyllysine. The 'KMSKS' region motif lies at 659-663; the sequence is KMSKS. Lysine 662 lines the ATP pocket.

Belongs to the class-I aminoacyl-tRNA synthetase family.

The protein resides in the mitochondrion. The enzyme catalyses tRNA(Val) + L-valine + ATP = L-valyl-tRNA(Val) + AMP + diphosphate. Its function is as follows. Catalyzes the attachment of valine to tRNA(Val) in a two-step reaction: valine is first activated by ATP to form Val-AMP and then transferred to the acceptor end of tRNA(Val). This chain is Valine--tRNA ligase, mitochondrial (Vars2), found in Mus musculus (Mouse).